We begin with the raw amino-acid sequence, 302 residues long: MYRELISHKIAELKKERKAIILAHNYQLGEIQDAADFVGDSLELARKAAKVDAEVIVFCGVHFMAETAAILSPEKIVLAPEPRAGCPMADMISGAELREFKSRHPGLPVVCYVNSTAEVKAESDICCTSANAVKVVESLKSDTVLFVPDQYLGAFVKERTSKKIISWPGYCPSHARIKPEDIVNLKKHYPAAKVIVHPESRPEVTALADEVLSTGQMVSYAARADVKELIVGTEIGMIYRLRKENPDKLFIPVSEQAVCANMKMTTLPKLLASLENMQAVVSVPEEIRVKAVGAVERMLRVV.

2 residues coordinate iminosuccinate: His24 and Ser41. Cys86 lines the [4Fe-4S] cluster pocket. Residues 112–114 and Ser129 contribute to the iminosuccinate site; that span reads YVN. Cys171 contacts [4Fe-4S] cluster. Residues 197–199 and Thr214 each bind iminosuccinate; that span reads HPE. Cys259 lines the [4Fe-4S] cluster pocket.

The protein belongs to the quinolinate synthase family. Type 2 subfamily. It depends on [4Fe-4S] cluster as a cofactor.

The protein localises to the cytoplasm. The enzyme catalyses iminosuccinate + dihydroxyacetone phosphate = quinolinate + phosphate + 2 H2O + H(+). The protein operates within cofactor biosynthesis; NAD(+) biosynthesis; quinolinate from iminoaspartate: step 1/1. In terms of biological role, catalyzes the condensation of iminoaspartate with dihydroxyacetone phosphate to form quinolinate. The chain is Quinolinate synthase from Dehalococcoides mccartyi (strain CBDB1).